A 187-amino-acid polypeptide reads, in one-letter code: uncharacterized protein (187 aa).

A lipid anchor (N-myristoyl glycine; by host) is attached at Gly2.

Belongs to the mimivirus L332/L333/L334 family.

This is an uncharacterized protein from Acanthamoeba polyphaga (Amoeba).